The primary structure comprises 769 residues: Integrin beta-2 (769 aa).

The first 22 residues, 1–22, serve as a signal peptide directing secretion; that stretch reads MLCRCSPLLLLVGLLTLRSALS. Gln-23 carries the pyrrolidone carboxylic acid modification. The Extracellular portion of the chain corresponds to 23 to 700; sequence QECAKYKVST…ETRECVKGPN (678 aa). In terms of domain architecture, PSI spans 24–74; it reads ECAKYKVSTCRDCIESGPGCAWCQKLNFSGQGEPDSVRCDTREQLLAKGCV. 28 disulfides stabilise this stretch: Cys-25-Cys-43, Cys-33-Cys-447, Cys-36-Cys-62, Cys-46-Cys-73, Cys-191-Cys-198, Cys-246-Cys-286, Cys-386-Cys-400, Cys-420-Cys-445, Cys-449-Cys-467, Cys-459-Cys-470, Cys-472-Cys-481, Cys-483-Cys-514, Cys-497-Cys-512, Cys-506-Cys-517, Cys-519-Cys-534, Cys-536-Cys-559, Cys-541-Cys-557, Cys-549-Cys-562, Cys-564-Cys-573, Cys-575-Cys-598, Cys-582-Cys-596, Cys-590-Cys-601, Cys-603-Cys-612, Cys-615-Cys-618, Cys-622-Cys-662, Cys-628-Cys-647, Cys-631-Cys-643, and Cys-670-Cys-695. Residues Asn-50 and Asn-116 are each glycosylated (N-linked (GlcNAc...) asparagine). One can recognise a VWFA domain in the interval 124–363; it reads GYPIDLYYLM…ELIKNAYNKL (240 aa). Residues Ser-136 and Ser-138 each contribute to the Mg(2+) site. Ca(2+) contacts are provided by Ser-138, Asp-141, Asp-142, and Asp-173. Positions 229, 231, 233, and 234 each coordinate Ca(2+). Glu-234 provides a ligand contact to Mg(2+). Asn-254 carries an N-linked (GlcNAc...) asparagine glycan. Ca(2+) contacts are provided by Asp-264 and Glu-347. Residues 397 to 399 carry the Cell attachment site motif; the sequence is RGD. I-EGF domains follow at residues 449 to 482, 483 to 535, 536 to 574, and 575 to 613; these read CGDSSKERTLCGNKGSMECGVCRCDAGYIGKHCE, CQTQ…QFCE, CDNMNCERFDGQVCGGEKRGLCFCSTCRCQEGFEGSACQ, and CLKSTQGCLNLQGVECSGRGRCRCNVCQCDFGYQPPLCT. A glycan (N-linked (GlcNAc...) asparagine) is linked at Asn-501. Asn-642 is a glycosylation site (N-linked (GlcNAc...) asparagine). Residues 701–723 traverse the membrane as a helical segment; that stretch reads IAAIVGGTVGGVVLVGIFLLVIW. At 724-769 the chain is on the cytoplasmic side; the sequence is KVLTHLSDLREYKRFEKEKLKSQWNNDNPLFKSATTTVMNPKFAER. Ser-745 and Ser-756 each carry phosphoserine. Phosphothreonine occurs at positions 758 and 760.

Belongs to the integrin beta chain family. Heterodimer of an alpha and a beta subunit. The ITGB2 beta subunit associates with the ITGAL, ITGAM, ITGAX or ITGAD alpha subunits. Found in a complex with CD177 and ITGAM/CD11b. Interacts with FGR. Interacts with COPS5 and RANBP9. Interacts with FLNA (via filamin repeats 4, 9, 12, 17, 19, 21, and 23). Interacts with THBD. In terms of processing, both Ser-745 and Ser-756 become phosphorylated when T-cells are exposed to phorbol esters. Phosphorylation on Thr-758 (but not on Ser-756) allows interaction with 14-3-3 proteins.

The protein resides in the cell membrane. Its subcellular location is the membrane raft. Integrin ITGAL/ITGB2 is a receptor for ICAM1, ICAM2, ICAM3 and ICAM4. Integrin ITGAL/ITGB2 is also a receptor for the secreted form of ubiquitin-like protein ISG15; the interaction is mediated by ITGAL. Integrins ITGAM/ITGB2 and ITGAX/ITGB2 are receptors for the iC3b fragment of the third complement component and for fibrinogen. Integrin ITGAX/ITGB2 recognizes the sequence G-P-R in fibrinogen alpha-chain. Integrin ITGAM/ITGB2 recognizes P1 and P2 peptides of fibrinogen gamma chain. Integrin ITGAM/ITGB2 is also a receptor for factor X. Integrin ITGAD/ITGB2 is a receptor for ICAM3 and VCAM1. Contributes to natural killer cell cytotoxicity. Involved in leukocyte adhesion and transmigration of leukocytes including T-cells and neutrophils. Triggers neutrophil transmigration during lung injury through PTK2B/PYK2-mediated activation. Integrin alpha-L/beta-2 in association with ICAM3, contributes to apoptotic neutrophil phagocytosis by macrophages. The sequence is that of Integrin beta-2 (ITGB2) from Sus scrofa (Pig).